The following is a 316-amino-acid chain: CXXC-type zinc finger protein 5 (316 aa).

Over residues 1–10 the composition is skewed to gly residues; it reads MSSLGGGSQD. The interval 1–95 is disordered; it reads MSSLGGGSQD…SGGAGSMMGG (95 aa). Composition is skewed to low complexity over residues 11-27 and 36-50; these read AGGS…SGSG and SATV…VADD. Residues 250-291 form a CXXC-type zinc finger; that stretch reads GKKKRKRCGMCAPCRRRINCEQCSSCRNRKTGHQICKFRKCE. A Nuclear localization signal motif is present at residues 251-256; it reads KKKRKR. Residues C257, C260, C263, C269, C272, C275, C285, and C290 each contribute to the Zn(2+) site.

As to quaternary structure, interacts with DVL1. Interacts with RBPJ. As to expression, expressed in neural stem cells (at protein level). Expressed in the dorsal telencephalon.

The protein localises to the nucleus. Its subcellular location is the cytoplasm. Its function is as follows. May indirectly participate in activation of the NF-kappa-B and MAPK pathways. Required for DNA damage-induced ATM phosphorylation, p53 activation and cell cycle arrest. Involved in myelopoiesis. Acts as a mediator of BMP4-mediated modulation of canonical Wnt signaling activity in neural stem cells. Binds to the oxygen responsive element of COX4I2 and represses its transcription under hypoxia conditions (4% oxygen), as well as normoxia conditions (20% oxygen). May repress COX4I2 transactivation induced by CHCHD2 and RBPJ. Binds preferentially to DNA containing cytidine-phosphate-guanosine (CpG) dinucleotides over CpH (H=A, T, and C), hemimethylated-CpG and hemimethylated-hydroxymethyl-CpG. The protein is CXXC-type zinc finger protein 5 (Cxxc5) of Rattus norvegicus (Rat).